A 394-amino-acid polypeptide reads, in one-letter code: Candidapepsin (394 aa).

An N-terminal signal peptide occupies residues 1 to 23 (MATIFLFTKNVFIALAFALFAQG). Positions 24–60 (LTIPDGIEKRTDKVVSLDFTVIRKPFNATAHRLIQKR) are cleaved as a propeptide — activation peptide. N-linked (GlcNAc...) asparagine glycosylation occurs at N50. Residues 74–381 (YAADIVVGSN…DLDDKTISLA (308 aa)) enclose the Peptidase A1 domain. Residue D92 is part of the active site. C107 and C119 form a disulfide bridge. Residue D278 is part of the active site. A disulfide bridge connects residues C314 and C347.

It belongs to the peptidase A1 family. In terms of processing, O-glycosylated.

Its subcellular location is the secreted. It catalyses the reaction Preferential cleavage at the carboxyl of hydrophobic amino acids, but fails to cleave 15-Leu-|-Tyr-16, 16-Tyr-|-Leu-17 and 24-Phe-|-Phe-25 of insulin B chain. Activates trypsinogen, and degrades keratin.. In Candida tropicalis (Yeast), this protein is Candidapepsin (SAPT1).